The following is a 421-amino-acid chain: Acetate kinase (421 aa).

A Mg(2+)-binding site is contributed by asparagine 7. ATP is bound at residue lysine 14. A substrate-binding site is contributed by arginine 91. Aspartate 148 acts as the Proton donor/acceptor in catalysis. ATP is bound by residues 208 to 212 (HIGNG) and 283 to 285 (DRR). Glutamate 387 contributes to the Mg(2+) binding site.

This sequence belongs to the acetokinase family. Homodimer. Mg(2+) serves as cofactor. Mn(2+) is required as a cofactor.

The protein resides in the cytoplasm. It catalyses the reaction acetate + ATP = acetyl phosphate + ADP. The protein operates within metabolic intermediate biosynthesis; acetyl-CoA biosynthesis; acetyl-CoA from acetate: step 1/2. Catalyzes the formation of acetyl phosphate from acetate and ATP. Can also catalyze the reverse reaction. In Trichlorobacter lovleyi (strain ATCC BAA-1151 / DSM 17278 / SZ) (Geobacter lovleyi), this protein is Acetate kinase.